The sequence spans 668 residues: Protein IQ-DOMAIN 14 (668 aa).

Residues Met-1–Ile-11 are calmodulin-binding. Disordered stretches follow at residues Thr-16–Ile-54 and Gly-66–Val-305. The span at His-18 to Ser-31 shows a compositional bias: basic and acidic residues. Residues Gly-32 to Leu-43 show a composition bias toward basic residues. Positions Pro-78 to Ala-96 are enriched in pro residues. Low complexity-rich tracts occupy residues Ser-97 to Ala-120 and Pro-166 to Pro-175. Residues Pro-269–Ser-279 are compositionally biased toward pro residues. IQ domains follow at residues Gln-321–Leu-350 and Ala-343–Gln-372. 2 disordered regions span residues Ala-399–Ala-431 and Ser-476–Ser-561. Over residues Val-415–Ala-431 the composition is skewed to basic and acidic residues. Residues Asp-516–Thr-529 show a composition bias toward polar residues.

It belongs to the IQD family. In terms of assembly, binds to multiple calmodulin (CaM) in the presence of Ca(2+) and CaM-like proteins. Expressed in hypocotyls, cotyledons, leaves and petioles.

The protein localises to the cell membrane. The protein resides in the cytoplasm. Its subcellular location is the cytoskeleton. Its function is as follows. May be involved in cooperative interactions with calmodulins or calmodulin-like proteins. Recruits calmodulin proteins to microtubules, thus being a potential scaffold in cellular signaling and trafficking. Regulates cell and organ shapes (prevents twisting) in aerial parts probably by regulating transverse microtubules (MT) arrays alignment. Regulates the formation of oval xylem secondary cell-wall deposition pits through microtubule-dependent lateral inhibition of Rho GTPase domains, thus confining the area of active ROP domains within the lattice of the cortical microtubules. May associate with nucleic acids and regulate gene expression at the transcriptional or post-transcriptional level. This Arabidopsis thaliana (Mouse-ear cress) protein is Protein IQ-DOMAIN 14.